Here is a 229-residue protein sequence, read N- to C-terminus: Protein fmp52-2, mitochondrial (229 aa).

Residues 1 to 45 constitute a mitochondrion transit peptide; that stretch reads MTTAAVFGSTGAVGGQILATLLASDAFSSVKTVSRRLPNAQSPKL.

It belongs to the FMP52 family.

It is found in the mitochondrion outer membrane. The protein is Protein fmp52-2, mitochondrial (fmp522) of Aspergillus oryzae (strain ATCC 42149 / RIB 40) (Yellow koji mold).